Reading from the N-terminus, the 426-residue chain is Gamma-glutamyl phosphate reductase (426 aa).

This sequence belongs to the gamma-glutamyl phosphate reductase family.

The protein localises to the cytoplasm. It catalyses the reaction L-glutamate 5-semialdehyde + phosphate + NADP(+) = L-glutamyl 5-phosphate + NADPH + H(+). The protein operates within amino-acid biosynthesis; L-proline biosynthesis; L-glutamate 5-semialdehyde from L-glutamate: step 2/2. Catalyzes the NADPH-dependent reduction of L-glutamate 5-phosphate into L-glutamate 5-semialdehyde and phosphate. The product spontaneously undergoes cyclization to form 1-pyrroline-5-carboxylate. This is Gamma-glutamyl phosphate reductase from Ralstonia nicotianae (strain ATCC BAA-1114 / GMI1000) (Ralstonia solanacearum).